A 369-amino-acid polypeptide reads, in one-letter code: 2-aminoethylphosphonate--pyruvate transaminase (369 aa).

Lys-193 carries the N6-(pyridoxal phosphate)lysine modification.

This sequence belongs to the class-V pyridoxal-phosphate-dependent aminotransferase family. PhnW subfamily. Homodimer. Pyridoxal 5'-phosphate serves as cofactor.

The catalysed reaction is (2-aminoethyl)phosphonate + pyruvate = phosphonoacetaldehyde + L-alanine. In terms of biological role, involved in phosphonate degradation. In Burkholderia pseudomallei (strain 668), this protein is 2-aminoethylphosphonate--pyruvate transaminase.